The following is a 174-amino-acid chain: Transcription antitermination protein NusB (174 aa).

Belongs to the NusB family.

Functionally, involved in transcription antitermination. Required for transcription of ribosomal RNA (rRNA) genes. Binds specifically to the boxA antiterminator sequence of the ribosomal RNA (rrn) operons. The sequence is that of Transcription antitermination protein NusB from Rhodopseudomonas palustris (strain ATCC BAA-98 / CGA009).